The primary structure comprises 139 residues: Putative pre-16S rRNA nuclease (139 aa).

It belongs to the YqgF nuclease family.

It is found in the cytoplasm. Could be a nuclease involved in processing of the 5'-end of pre-16S rRNA. The polypeptide is Putative pre-16S rRNA nuclease (Streptococcus thermophilus (strain ATCC BAA-491 / LMD-9)).